Here is a 446-residue protein sequence, read N- to C-terminus: Methylenetetrahydrofolate--tRNA-(uracil-5-)-methyltransferase TrmFO (446 aa).

An FAD-binding site is contributed by 8 to 13; sequence GAGLAG.

The protein belongs to the MnmG family. TrmFO subfamily. FAD serves as cofactor.

It localises to the cytoplasm. It carries out the reaction uridine(54) in tRNA + (6R)-5,10-methylene-5,6,7,8-tetrahydrofolate + NADH + H(+) = 5-methyluridine(54) in tRNA + (6S)-5,6,7,8-tetrahydrofolate + NAD(+). The catalysed reaction is uridine(54) in tRNA + (6R)-5,10-methylene-5,6,7,8-tetrahydrofolate + NADPH + H(+) = 5-methyluridine(54) in tRNA + (6S)-5,6,7,8-tetrahydrofolate + NADP(+). Functionally, catalyzes the folate-dependent formation of 5-methyl-uridine at position 54 (M-5-U54) in all tRNAs. The polypeptide is Methylenetetrahydrofolate--tRNA-(uracil-5-)-methyltransferase TrmFO (Paracoccus denitrificans (strain Pd 1222)).